The chain runs to 601 residues: Zinc finger protein 37 (601 aa).

Residues Met1–Ser70 enclose the KRAB domain. Thr3 is subject to Phosphothreonine. Position 9 is a phosphoserine (Ser9). A compositionally biased stretch (polar residues) spans Glu30–Pro43. The interval Glu30 to Gly254 is disordered. A compositionally biased stretch (low complexity) spans Ser60–Ser70. A compositionally biased stretch (polar residues) spans Thr77–Ala88. Composition is skewed to basic and acidic residues over residues Lys115–Lys136, Lys164–Lys174, and Val183–Lys238. The segment at Tyr257–His279 adopts a C2H2-type 1 zinc-finger fold. A C2H2-type 2; atypical zinc finger spans residues Tyr285 to His303. 10 consecutive C2H2-type zinc fingers follow at residues Tyr314–His337, Tyr343–His365, Tyr371–His393, Tyr399–His421, Phe427–His449, Tyr455–His477, Phe483–His505, Tyr511–His533, Phe539–His561, and Tyr570–His592.

This sequence belongs to the krueppel C2H2-type zinc-finger protein family. In terms of tissue distribution, expressed in testes, brain, kidney, spleen, thymus, lung, and at low levels in liver.

The protein localises to the nucleus. Its function is as follows. May be involved in transcriptional regulation. This Rattus norvegicus (Rat) protein is Zinc finger protein 37 (Zfp37).